The following is a 323-amino-acid chain: tRNA U34 carboxymethyltransferase (323 aa).

Carboxy-S-adenosyl-L-methionine is bound by residues Lys91, Trp105, Lys110, Gly130, 181 to 182, Met196, Tyr200, and Arg315; that span reads IE.

Belongs to the class I-like SAM-binding methyltransferase superfamily. CmoB family. Homotetramer.

It carries out the reaction carboxy-S-adenosyl-L-methionine + 5-hydroxyuridine(34) in tRNA = 5-carboxymethoxyuridine(34) in tRNA + S-adenosyl-L-homocysteine + H(+). In terms of biological role, catalyzes carboxymethyl transfer from carboxy-S-adenosyl-L-methionine (Cx-SAM) to 5-hydroxyuridine (ho5U) to form 5-carboxymethoxyuridine (cmo5U) at position 34 in tRNAs. This is tRNA U34 carboxymethyltransferase from Serratia proteamaculans (strain 568).